The following is a 596-amino-acid chain: Nuclear receptor subfamily 2 group C member 2 (596 aa).

Serine 19 carries the phosphoserine; by MAPK modification. A Phosphoserine modification is found at serine 46. Residues serine 55 and serine 68 each carry the phosphoserine; by MAPK modification. Serine 98 carries the post-translational modification Phosphoserine. Residues 114 to 189 (VEYCVVCGDK…MGMKMESVQS (76 aa)) constitute a DNA-binding region (nuclear receptor). 2 NR C4-type zinc fingers span residues 117–137 (CVVCGDKASGRHYGAVSCEGC) and 153–177 (CRSSQDCIINKHHRNRCQFCRLKKC). Residue lysine 192 forms a Glycyl lysine isopeptide (Lys-Gly) (interchain with G-Cter in SUMO2) linkage. Residue serine 219 is modified to Phosphoserine. Lysine 231 carries the N6-acetyllysine modification. An NR LBD domain is found at 341–583 (GSIHVISRDQ…SIIPYILKME (243 aa)).

This sequence belongs to the nuclear hormone receptor family. NR2 subfamily. Homodimer; can bind DNA as homodimer. Heterodimer; binds DNA as a heterodimer with NR2C1 required for chromatin remodeling and for binding to promoter regions such as globin DR1 repeats. Interacts with NR2C2AP; the interaction represses selective NR2C2-mediated transcriptional activity. Interacts with PCAF; the interaction preferentially occurs on the non-phosphorylated form and induces NR2C2-mediated transactivation activity and does not require the ligand-binding domain. Interacts (MAPK-mediated phosphorylated form) with NRIP1; the interaction promotes repression of NR2C2-mediated activity. Interacts with NLRP10. Interacts (via ligand-binding region) with transcriptional corepressor JAZF1; the interaction promotes NR2C2-mediated transcriptional repression. Post-translationally, phosphorylation on Ser-19 and Ser-68 is an important regulator of NR2C2-mediated transcriptional activity. Phosphorylation on these residues recruits the corepressor, NRIP1, leading to transcripional repression, whereas the non-phosphorylated form preferentially recruits the coactivator, PCAF. In terms of tissue distribution, expressed in hepatocytes. Also expressed in granule cells of the hippocampus and the cerebellum.

The protein localises to the nucleus. In terms of biological role, orphan nuclear receptor that can act as a repressor or activator of transcription. An important repressor of nuclear receptor signaling pathways such as retinoic acid receptor, retinoid X, vitamin D3 receptor, thyroid hormone receptor and estrogen receptor pathways. May regulate gene expression during the late phase of spermatogenesis. Activates transcriptional activity of LHCG and is antagonist of PPARA-mediated transactivation. Together with NR2C1, forms the core of the DRED (direct repeat erythroid-definitive) complex that represses embryonic and fetal globin transcription including that of GATA1. Binds to hormone response elements (HREs) consisting of two 5'-AGGTCA-3' half site direct repeat consensus sequences. Plays a fundamental role in early embryonic development and embryonic stem cells. Required for normal spermatogenesis and cerebellum development. Appears to be important for neurodevelopmentally regulated behavior. In Rattus norvegicus (Rat), this protein is Nuclear receptor subfamily 2 group C member 2 (Nr2c2).